Consider the following 543-residue polypeptide: Excitatory amino acid transporter 1 (543 aa).

Residues 1–47 lie on the Cytoplasmic side of the membrane; the sequence is MTKSNGEEPRMGSRMERFQQGVRKRTLLAKKKVQNITKEDVKSYLFR. Residues 48–68 traverse the membrane as a helical segment; it reads NAFVLLTVSAVIVGTILGFAL. Topologically, residues 69 to 86 are extracellular; the sequence is RPYKMSYREVKYFSFPGE. The chain crosses the membrane as a helical span at residues 87–108; the sequence is LLMRMLQMLVLPLIISSLVTGM. At 109–122 the chain is on the cytoplasmic side; the sequence is AALDSKASGKMGMR. The chain crosses the membrane as a helical span at residues 123 to 145; the sequence is AVVYYMTTTIIAVVIGIIIVIII. Topologically, residues 146–236 are extracellular; it reads HPGKGTKENM…IREEMVPVPG (91 aa). Residues 237-260 form a helical membrane-spanning segment; it reads SVNGVNALGLVVFSMCFGFVIGNM. Over 261 to 269 the chain is Cytoplasmic; it reads KEQGQALRE. Residues 270-297 traverse the membrane as a helical segment; the sequence is FFDSLNEAIMRLVAVIMWYAPLGILFLI. The Extracellular portion of the chain corresponds to 298–318; that stretch reads AGKILEMEDMGVIGGQLAMYT. The chain crosses the membrane as a helical span at residues 319 to 340; it reads VTVIVGLLIHAVIVLPLLYFLV. Residues 341-345 lie on the Cytoplasmic side of the membrane; sequence TRKNP. Residues 346 to 376 constitute an intramembrane region (discontinuously helical); sequence WVFIGGLLQALITALGTSSSSATLPITFKCL. 363-365 serves as a coordination point for L-aspartate; sequence SSS. The Cytoplasmic segment spans residues 377 to 385; sequence EENNGVDKR. A helical transmembrane segment spans residues 386–412; that stretch reads ITRFVLPVGATINMDGTALYEALAAIF. Residues Gly-394, Thr-396, and Asn-398 each coordinate Na(+). Thr-402 provides a ligand contact to L-aspartate. Topologically, residues 413-425 are extracellular; sequence IAQVNNFDLNFGQ. The segment at residues 426–459 is an intramembrane region (discontinuously helical); sequence IITISITATAASIGAAGIPQAGLVTMVIVLTSVG. Residue 443–447 coordinates L-aspartate; it reads IPQAG. The Extracellular segment spans residues 460 to 472; that stretch reads LPTDDITLIIAVD. A helical membrane pass occupies residues 473–494; sequence WFLDRLRTTTNVLGDSLGAGIV. L-aspartate contacts are provided by Asp-476 and Asn-483. Na(+) is bound by residues Asn-483 and Asp-487. At 495–543 the chain is on the cytoplasmic side; the sequence is EHLSRHELKNRDVEMGNSVIEENEMKKPYQLIAQDNEPEKPVADSETKM. A Phosphoserine modification is found at Ser-512. The segment at 522–543 is disordered; it reads PYQLIAQDNEPEKPVADSETKM. Basic and acidic residues predominate over residues 531–543; the sequence is EPEKPVADSETKM.

The protein belongs to the dicarboxylate/amino acid:cation symporter (DAACS) (TC 2.A.23) family. SLC1A3 subfamily. Homotrimer. Post-translationally, glycosylated. In terms of tissue distribution, detected in brain and cerebellum. Both isoform GLAST-1 and GLAST-1A are expressed in bone and brain. In brain isoform GLAST-1 is highly enriched in the Purkinje cell layer in cerebellum.

The protein resides in the cell membrane. The enzyme catalyses K(+)(in) + L-glutamate(out) + 3 Na(+)(out) + H(+)(out) = K(+)(out) + L-glutamate(in) + 3 Na(+)(in) + H(+)(in). It catalyses the reaction K(+)(in) + L-aspartate(out) + 3 Na(+)(out) + H(+)(out) = K(+)(out) + L-aspartate(in) + 3 Na(+)(in) + H(+)(in). It carries out the reaction D-aspartate(out) + K(+)(in) + 3 Na(+)(out) + H(+)(out) = D-aspartate(in) + K(+)(out) + 3 Na(+)(in) + H(+)(in). In terms of biological role, sodium-dependent, high-affinity amino acid transporter that mediates the uptake of L-glutamate and also L-aspartate and D-aspartate. Functions as a symporter that transports one amino acid molecule together with two or three Na(+) ions and one proton, in parallel with the counter-transport of one K(+) ion. Plays a redundant role in the rapid removal of released glutamate from the synaptic cleft, which is essential for terminating the postsynaptic action of glutamate. The polypeptide is Excitatory amino acid transporter 1 (Slc1a3) (Rattus norvegicus (Rat)).